Consider the following 459-residue polypeptide: ATP-dependent protease ATPase subunit HslU (459 aa).

ATP contacts are provided by residues Val21, 63 to 68, Asp273, Glu338, and Arg410; that span reads GVGKTE.

It belongs to the ClpX chaperone family. HslU subfamily. A double ring-shaped homohexamer of HslV is capped on each side by a ring-shaped HslU homohexamer. The assembly of the HslU/HslV complex is dependent on binding of ATP.

It localises to the cytoplasm. Functionally, ATPase subunit of a proteasome-like degradation complex; this subunit has chaperone activity. The binding of ATP and its subsequent hydrolysis by HslU are essential for unfolding of protein substrates subsequently hydrolyzed by HslV. HslU recognizes the N-terminal part of its protein substrates and unfolds these before they are guided to HslV for hydrolysis. This chain is ATP-dependent protease ATPase subunit HslU, found in Thermosipho africanus (strain TCF52B).